The chain runs to 349 residues: Quinolinate synthase (349 aa).

Positions 52 and 69 each coordinate iminosuccinate. Cys114 lines the [4Fe-4S] cluster pocket. Iminosuccinate contacts are provided by residues 140 to 142 and Ser157; that span reads YFN. Cys201 contacts [4Fe-4S] cluster. Residues 227–229 and Thr255 each bind iminosuccinate; that span reads HPE. Cys300 serves as a coordination point for [4Fe-4S] cluster.

This sequence belongs to the quinolinate synthase family. Type 2 subfamily. [4Fe-4S] cluster serves as cofactor.

It localises to the cytoplasm. It catalyses the reaction iminosuccinate + dihydroxyacetone phosphate = quinolinate + phosphate + 2 H2O + H(+). It functions in the pathway cofactor biosynthesis; NAD(+) biosynthesis; quinolinate from iminoaspartate: step 1/1. Functionally, catalyzes the condensation of iminoaspartate with dihydroxyacetone phosphate to form quinolinate. This chain is Quinolinate synthase, found in Mycolicibacterium paratuberculosis (strain ATCC BAA-968 / K-10) (Mycobacterium paratuberculosis).